Reading from the N-terminus, the 477-residue chain is Glycogen synthase (477 aa).

Lys15 contacts ADP-alpha-D-glucose.

This sequence belongs to the glycosyltransferase 1 family. Bacterial/plant glycogen synthase subfamily.

The catalysed reaction is [(1-&gt;4)-alpha-D-glucosyl](n) + ADP-alpha-D-glucose = [(1-&gt;4)-alpha-D-glucosyl](n+1) + ADP + H(+). It functions in the pathway glycan biosynthesis; glycogen biosynthesis. In terms of biological role, synthesizes alpha-1,4-glucan chains using ADP-glucose. The chain is Glycogen synthase from Streptococcus pneumoniae (strain Hungary19A-6).